The primary structure comprises 318 residues: tRNA-cytidine(32) 2-sulfurtransferase (318 aa).

The interval 1–29 (MNHVSSTKPDTAPSKHLTSSHIDATDQNN) is disordered. Over residues 16 to 27 (HLTSSHIDATDQ) the composition is skewed to polar residues. Positions 64 to 69 (SGGKDS) match the PP-loop motif motif. Residues cysteine 139, cysteine 142, and cysteine 230 each coordinate [4Fe-4S] cluster.

Belongs to the TtcA family. In terms of assembly, homodimer. Mg(2+) is required as a cofactor. It depends on [4Fe-4S] cluster as a cofactor.

It localises to the cytoplasm. The enzyme catalyses cytidine(32) in tRNA + S-sulfanyl-L-cysteinyl-[cysteine desulfurase] + AH2 + ATP = 2-thiocytidine(32) in tRNA + L-cysteinyl-[cysteine desulfurase] + A + AMP + diphosphate + H(+). It functions in the pathway tRNA modification. Functionally, catalyzes the ATP-dependent 2-thiolation of cytidine in position 32 of tRNA, to form 2-thiocytidine (s(2)C32). The sulfur atoms are provided by the cysteine/cysteine desulfurase (IscS) system. This is tRNA-cytidine(32) 2-sulfurtransferase from Pseudoalteromonas atlantica (strain T6c / ATCC BAA-1087).